We begin with the raw amino-acid sequence, 883 residues long: Collagen, type I, alpha 1b (883 aa).

Residues Q1–R883 form a disordered region. Residues P13–S33 are compositionally biased toward pro residues. Composition is skewed to low complexity over residues S34 to S57, V113 to R122, and S129 to P140. Gly residues-rich tracts occupy residues T147–G161 and G185–G194. Low complexity-rich tracts occupy residues S195 to P205, A214 to P223, and P230 to A248. Residues G285–G297 show a composition bias toward gly residues. Low complexity-rich tracts occupy residues A310–K326 and V390–A402. The span at G415–G424 shows a compositional bias: gly residues. Low complexity predominate over residues A425 to A444. Gly residues-rich tracts occupy residues G445 to G454 and G478 to G487. The segment covering A512–K542 has biased composition (low complexity). Over residues G564 to G573 the composition is skewed to gly residues. Low complexity-rich tracts occupy residues A574–V584, A717–K726, and S742–A756. Over residues K757–H771 the composition is skewed to basic and acidic residues. Positions P792–G812 are enriched in low complexity. A compositionally biased stretch (pro residues) spans A821 to P836.

The protein belongs to the fibrillar collagen family.

The chain is Collagen, type I, alpha 1b from Epinephelus costae (Goldblotch grouper).